A 608-amino-acid polypeptide reads, in one-letter code: Glutamyl-tRNA(Gln) amidotransferase subunit E (608 aa).

A disordered region spans residues 401 to 428 (PEETRAANPDGTTRFLRPRPGAARMYPE).

It belongs to the GatB/GatE family. GatE subfamily. In terms of assembly, heterodimer of GatD and GatE.

It carries out the reaction L-glutamyl-tRNA(Gln) + L-glutamine + ATP + H2O = L-glutaminyl-tRNA(Gln) + L-glutamate + ADP + phosphate + H(+). Its function is as follows. Allows the formation of correctly charged Gln-tRNA(Gln) through the transamidation of misacylated Glu-tRNA(Gln) in organisms which lack glutaminyl-tRNA synthetase. The reaction takes place in the presence of glutamine and ATP through an activated gamma-phospho-Glu-tRNA(Gln). The GatDE system is specific for glutamate and does not act on aspartate. The sequence is that of Glutamyl-tRNA(Gln) amidotransferase subunit E from Pyrobaculum arsenaticum (strain DSM 13514 / JCM 11321 / PZ6).